A 353-amino-acid chain; its full sequence is Palmitoyltransferase SWF1 (353 aa).

A topological domain (lumenal) is located at residue Met-1. A helical transmembrane segment spans residues Leu-2–Phe-22. Over Gly-23–Gln-61 the chain is Cytoplasmic. Residues Leu-62–Phe-82 traverse the membrane as a helical segment. Over Gln-83 to Arg-100 the chain is Lumenal. The helical transmembrane segment at Leu-101–Ser-121 threads the bilayer. Topologically, residues Asp-122–Lys-190 are cytoplasmic. The DHHC domain occupies Lys-147 to Ile-197. Cys-177 acts as the S-palmitoyl cysteine intermediate in catalysis. Residues Trp-191–Tyr-211 traverse the membrane as a helical segment. At Trp-212 to Gly-233 the chain is on the lumenal side. The chain crosses the membrane as a helical span at residues Ile-234–Leu-254. Residues Arg-255–Trp-353 are Cytoplasmic-facing.

The protein belongs to the DHHC palmitoyltransferase family. SWF1 subfamily.

The protein resides in the endoplasmic reticulum membrane. The catalysed reaction is L-cysteinyl-[protein] + hexadecanoyl-CoA = S-hexadecanoyl-L-cysteinyl-[protein] + CoA. Palmitoyltransferase that targets several endosomal SNAREs. Palmitoylates the SNAREs at cysteine residues close to the cytoplasmic end of their transmembrane domain. May have a role in the cellular quality control of transmembrane domain-containing proteins. The polypeptide is Palmitoyltransferase SWF1 (SWF1) (Candida albicans (strain SC5314 / ATCC MYA-2876) (Yeast)).